We begin with the raw amino-acid sequence, 312 residues long: Glycerol-3-phosphate dehydrogenase [NAD(P)+] (312 aa).

NADPH contacts are provided by tryptophan 11, arginine 30, arginine 31, and lysine 95. Residues lysine 95, glycine 123, and serine 125 each contribute to the sn-glycerol 3-phosphate site. Residue alanine 127 coordinates NADPH. Lysine 177, aspartate 230, serine 240, arginine 241, and asparagine 242 together coordinate sn-glycerol 3-phosphate. Residue lysine 177 is the Proton acceptor of the active site. An NADPH-binding site is contributed by arginine 241. The NADPH site is built by valine 265 and glutamate 267.

It belongs to the NAD-dependent glycerol-3-phosphate dehydrogenase family.

It localises to the cytoplasm. It catalyses the reaction sn-glycerol 3-phosphate + NAD(+) = dihydroxyacetone phosphate + NADH + H(+). The catalysed reaction is sn-glycerol 3-phosphate + NADP(+) = dihydroxyacetone phosphate + NADPH + H(+). It participates in membrane lipid metabolism; glycerophospholipid metabolism. In terms of biological role, catalyzes the reduction of the glycolytic intermediate dihydroxyacetone phosphate (DHAP) to sn-glycerol 3-phosphate (G3P), the key precursor for phospholipid synthesis. The chain is Glycerol-3-phosphate dehydrogenase [NAD(P)+] from Helicobacter pylori (strain Shi470).